We begin with the raw amino-acid sequence, 185 residues long: Elongation factor P (185 aa).

It belongs to the elongation factor P family.

It localises to the cytoplasm. It participates in protein biosynthesis; polypeptide chain elongation. Functionally, involved in peptide bond synthesis. Stimulates efficient translation and peptide-bond synthesis on native or reconstituted 70S ribosomes in vitro. Probably functions indirectly by altering the affinity of the ribosome for aminoacyl-tRNA, thus increasing their reactivity as acceptors for peptidyl transferase. The protein is Elongation factor P of Desulforudis audaxviator (strain MP104C).